The sequence spans 432 residues: Adenylosuccinate synthetase (432 aa).

GTP is bound by residues 12–18 (GDEGKGK) and 40–42 (GHT). The active-site Proton acceptor is aspartate 13. 2 residues coordinate Mg(2+): aspartate 13 and glycine 40. IMP-binding positions include 13-16 (DEGK), 38-41 (NAGH), threonine 132, arginine 146, glutamine 226, threonine 241, and arginine 305. Histidine 41 functions as the Proton donor in the catalytic mechanism. Residue 301–307 (VVTGRKR) participates in substrate binding. GTP-binding positions include arginine 307, 333-335 (KLD), and 415-417 (STS).

It belongs to the adenylosuccinate synthetase family. As to quaternary structure, homodimer. The cofactor is Mg(2+).

The protein localises to the cytoplasm. The enzyme catalyses IMP + L-aspartate + GTP = N(6)-(1,2-dicarboxyethyl)-AMP + GDP + phosphate + 2 H(+). Its pathway is purine metabolism; AMP biosynthesis via de novo pathway; AMP from IMP: step 1/2. Plays an important role in the de novo pathway of purine nucleotide biosynthesis. Catalyzes the first committed step in the biosynthesis of AMP from IMP. This is Adenylosuccinate synthetase from Rhizobium etli (strain CIAT 652).